Here is a 279-residue protein sequence, read N- to C-terminus: Movement protein (279 aa).

The protein belongs to the cucumovirus movement protein family.

Its subcellular location is the host cell junction. It localises to the host plasmodesma. Transports viral genome to neighboring plant cells directly through plasmosdesmata, without any budding. The movement protein allows efficient cell to cell propagation, by bypassing the host cell wall barrier. Acts by forming a tubular structure at the host plasmodesmata, enlarging it enough to allow free passage of virion capsids. In Cucumber mosaic virus (strain As) (CMV), this protein is Movement protein.